The primary structure comprises 370 residues: Quinolinate synthase (370 aa).

The iminosuccinate site is built by His62 and Ser83. Cys128 contributes to the [4Fe-4S] cluster binding site. Iminosuccinate contacts are provided by residues 154–156 and Ser171; that span reads YAN. Position 215 (Cys215) interacts with [4Fe-4S] cluster. Residues 241–243 and Thr258 each bind iminosuccinate; that span reads HPE. Residue Cys312 coordinates [4Fe-4S] cluster.

Belongs to the quinolinate synthase family. Type 1 subfamily. [4Fe-4S] cluster is required as a cofactor.

It localises to the cytoplasm. It catalyses the reaction iminosuccinate + dihydroxyacetone phosphate = quinolinate + phosphate + 2 H2O + H(+). It functions in the pathway cofactor biosynthesis; NAD(+) biosynthesis; quinolinate from iminoaspartate: step 1/1. Functionally, catalyzes the condensation of iminoaspartate with dihydroxyacetone phosphate to form quinolinate. This Neisseria meningitidis serogroup B (strain ATCC BAA-335 / MC58) protein is Quinolinate synthase.